A 220-amino-acid chain; its full sequence is Deoxyribose-phosphate aldolase (220 aa).

The active-site Proton donor/acceptor is Asp-89. The active-site Schiff-base intermediate with acetaldehyde is the Lys-152. Catalysis depends on Lys-181, which acts as the Proton donor/acceptor.

Belongs to the DeoC/FbaB aldolase family. DeoC type 1 subfamily.

It is found in the cytoplasm. The catalysed reaction is 2-deoxy-D-ribose 5-phosphate = D-glyceraldehyde 3-phosphate + acetaldehyde. The protein operates within carbohydrate degradation; 2-deoxy-D-ribose 1-phosphate degradation; D-glyceraldehyde 3-phosphate and acetaldehyde from 2-deoxy-alpha-D-ribose 1-phosphate: step 2/2. In terms of biological role, catalyzes a reversible aldol reaction between acetaldehyde and D-glyceraldehyde 3-phosphate to generate 2-deoxy-D-ribose 5-phosphate. This Enterococcus faecalis (strain ATCC 700802 / V583) protein is Deoxyribose-phosphate aldolase.